Reading from the N-terminus, the 743-residue chain is Catalase-peroxidase (743 aa).

The disordered stretch occupies residues 1 to 22 (MEKQSNDAAVAGAPNDHGAAKC). The tryptophyl-tyrosyl-methioninium (Trp-Tyr) (with M-253) cross-link spans 105–227 (WHSAGTYRIT…LGAVQMGLIY (123 aa)). Catalysis depends on histidine 106, which acts as the Proton acceptor. A cross-link (tryptophyl-tyrosyl-methioninium (Tyr-Met) (with W-105)) is located at residues 227 to 253 (YVNPEGPNGNPDPVAAAKDIRETFFRM). Histidine 268 is a heme b binding site.

This sequence belongs to the peroxidase family. Peroxidase/catalase subfamily. In terms of assembly, homodimer or homotetramer. The cofactor is heme b. Post-translationally, formation of the three residue Trp-Tyr-Met cross-link is important for the catalase, but not the peroxidase activity of the enzyme.

The enzyme catalyses H2O2 + AH2 = A + 2 H2O. It carries out the reaction 2 H2O2 = O2 + 2 H2O. Bifunctional enzyme with both catalase and broad-spectrum peroxidase activity. The sequence is that of Catalase-peroxidase from Solibacter usitatus (strain Ellin6076).